A 503-amino-acid chain; its full sequence is Maturase K (503 aa).

It belongs to the intron maturase 2 family. MatK subfamily.

The protein resides in the plastid. The protein localises to the chloroplast. Functionally, usually encoded in the trnK tRNA gene intron. Probably assists in splicing its own and other chloroplast group II introns. This Rosa canina (Dog rose) protein is Maturase K.